The sequence spans 37 residues: Large ribosomal subunit protein bL36c (37 aa).

This sequence belongs to the bacterial ribosomal protein bL36 family.

It localises to the plastid. The protein localises to the chloroplast. The polypeptide is Large ribosomal subunit protein bL36c (Vitis vinifera (Grape)).